The following is a 104-amino-acid chain: MAIIPDKQDSTVLERKEQKLKPPSMYKVVLLNDDFTPMEFVVMIVQEYFKKDRETATQIMLKVHREGRGVCGVYTRDIASTKVEQVVTHARQAGHPLQCVMEEA.

Belongs to the ClpS family. Binds to the N-terminal domain of the chaperone ClpA.

Involved in the modulation of the specificity of the ClpAP-mediated ATP-dependent protein degradation. The protein is ATP-dependent Clp protease adapter protein ClpS of Burkholderia thailandensis (strain ATCC 700388 / DSM 13276 / CCUG 48851 / CIP 106301 / E264).